We begin with the raw amino-acid sequence, 248 residues long: Probable transcriptional regulatory protein trd_1132 (248 aa).

This sequence belongs to the TACO1 family.

Its subcellular location is the cytoplasm. This Thermomicrobium roseum (strain ATCC 27502 / DSM 5159 / P-2) protein is Probable transcriptional regulatory protein trd_1132.